We begin with the raw amino-acid sequence, 449 residues long: Plasmepsin IV (449 aa).

The Cytoplasmic segment spans residues 1 to 37; the sequence is MALTVKEEEFSNTLIKNASAFDRLKLGNLKNLKIQKK. Positions 1–121 are excised as a propeptide; it reads MALTVKEEEF…SGYAQKGYLG (121 aa). The helical; Signal-anchor for type II membrane protein transmembrane segment at 38–58 threads the bilayer; the sequence is LQFLYLILFVLITGVFFFFLI. Residues 59–449 are Lumenal-facing; sequence GNFYSHRKLY…SVGFAVAKNL (391 aa). The 308-residue stretch at 137-444 folds into the Peptidase A1 domain; the sequence is FYGEGQIGTN…DYEKESVGFA (308 aa). Residue D155 is part of the active site. C168 and C173 form a disulfide bridge. D335 is an active-site residue. A disulfide bridge links C370 with C406.

Belongs to the peptidase A1 family. In terms of assembly, component of the hemozoin formation complex (HFC) composed of falcipains FP2A and/or FP2B, plasmepsins PMII, PMIII/HAP and PMIV, heme detoxifying protein HDP and falcilysin FLN. The HFC complex is involved in hemoglobin degradation and detoxification of heme in the food vacuole during the asexual blood stage. Proteolytically cleaved into the soluble active mature form by cysteine proteases in the digestive vacuole of trophozoites. Proteolysis requires an acidic environment. Autoprocessing or transprocessing by other plasmepsins such as PMII may serve as an alternate activation system.

It is found in the membrane. Its subcellular location is the vacuole lumen. It carries out the reaction Hydrolysis of the bonds linking certain hydrophobic residues in hemoglobin or globin. Also cleaves small molecules substrates such as Ala-Leu-Glu-Arg-Thr-Phe-|-Phe(NO2)-Ser-Phe-Pro-Thr.. Inhibited by KNI derived compounds KNI-10333 and to a lesser extent KNI-10743. During the asexual blood stage, catalyzes the cleavage of denatured host hemoglobin (Hb). Digestion of host Hb is an essential step which provides the parasite with amino acids for protein synthesis, and regulates osmolarity. This Plasmodium falciparum (isolate 3D7) protein is Plasmepsin IV.